A 278-amino-acid polypeptide reads, in one-letter code: Gamma carbonic anhydrase 2, mitochondrial (278 aa).

A mitochondrion-targeting transit peptide spans 1–43; sequence MGTLGRAIYTVGNWIRGTGQALDRVGSLLQGSHRIEEHLSRHR. Substrate is bound by residues 86–88 and 101–102; these read RGD and QD. H107, H130, and H135 together coordinate Zn(2+). Substrate is bound at residue N209.

Belongs to the gamma-class carbonic anhydrase family. In terms of assembly, homotrimer. Component of the mitochondrial oxidoreductase respiratory chain complex I; element of the extra matrix-exposed domain, which is attached to the membrane arm of this complex. Interacts with GAMMACAL1 and GAMMACAL2. The cofactor is Zn(2+). As to expression, constitutively expressed in roots and leaves, with higher levels in flowers, particularly in tapetal tissue of anthers, inflorescence (IM) and floral meristems (FM).

The protein resides in the mitochondrion membrane. Its function is as follows. Enzyme involved in the catabolism of H(2)CO(3) but that does not mediates the reversible hydration of carbon dioxide. Mediates complex I assembly in mitochondria and respiration. Binds HCO(3)-. Required for male fertility during anther development and dehiscence to regulate the secondary thickenings of the endothecial cell wall, probably by modulating H(2)O(2)-dependent lignin polymerization. The protein is Gamma carbonic anhydrase 2, mitochondrial (GAMMACA2) of Arabidopsis thaliana (Mouse-ear cress).